The primary structure comprises 172 residues: Large ribosomal subunit protein uL10 (172 aa).

Belongs to the universal ribosomal protein uL10 family. As to quaternary structure, part of the ribosomal stalk of the 50S ribosomal subunit. The N-terminus interacts with L11 and the large rRNA to form the base of the stalk. The C-terminus forms an elongated spine to which L12 dimers bind in a sequential fashion forming a multimeric L10(L12)X complex.

Its function is as follows. Forms part of the ribosomal stalk, playing a central role in the interaction of the ribosome with GTP-bound translation factors. The sequence is that of Large ribosomal subunit protein uL10 (rplJ) from Brucella abortus biovar 1 (strain 9-941).